We begin with the raw amino-acid sequence, 634 residues long: DNA gyrase subunit B (634 aa).

The 115-residue stretch at 416–530 (REIYIVEGDS…NGYIYIAMPP (115 aa)) folds into the Toprim domain. Mg(2+) contacts are provided by Glu422, Asp495, and Asp497.

This sequence belongs to the type II topoisomerase GyrB family. As to quaternary structure, heterotetramer, composed of two GyrA and two GyrB chains. In the heterotetramer, GyrA contains the active site tyrosine that forms a transient covalent intermediate with DNA, while GyrB binds cofactors and catalyzes ATP hydrolysis. The cofactor is Mg(2+). Mn(2+) serves as cofactor. Requires Ca(2+) as cofactor.

It is found in the cytoplasm. The enzyme catalyses ATP-dependent breakage, passage and rejoining of double-stranded DNA.. A type II topoisomerase that negatively supercoils closed circular double-stranded (ds) DNA in an ATP-dependent manner to modulate DNA topology and maintain chromosomes in an underwound state. Negative supercoiling favors strand separation, and DNA replication, transcription, recombination and repair, all of which involve strand separation. Also able to catalyze the interconversion of other topological isomers of dsDNA rings, including catenanes and knotted rings. Type II topoisomerases break and join 2 DNA strands simultaneously in an ATP-dependent manner. This Borreliella burgdorferi (strain ATCC 35210 / DSM 4680 / CIP 102532 / B31) (Borrelia burgdorferi) protein is DNA gyrase subunit B.